The sequence spans 236 residues: MTKSQGFQFKQFFIAHDKCAMKVNTDGILLGAIADIRHKRQILDLGTGTGLVAIMLAQRTDENTQISALELEPNAYRQAVENCRNSAFSDRLQVYQGDVLDYHFHQKFDLIVSNPPYFSESLASRSYERDLARAATQSHLDWLLQAKKWLAEQGEISFILPFEAAEKLVEQSRTSCLFCTKICKIITKQGQAAKRMIVSFSAQNVPLEEQELVIYDADNQYTEAFKQLTKAFYLNM.

This sequence belongs to the methyltransferase superfamily. tRNA (adenine-N(6)-)-methyltransferase family.

It is found in the cytoplasm. It catalyses the reaction adenosine(37) in tRNA1(Val) + S-adenosyl-L-methionine = N(6)-methyladenosine(37) in tRNA1(Val) + S-adenosyl-L-homocysteine + H(+). Its function is as follows. Specifically methylates the adenine in position 37 of tRNA(1)(Val) (anticodon cmo5UAC). In Actinobacillus pleuropneumoniae serotype 5b (strain L20), this protein is tRNA1(Val) (adenine(37)-N6)-methyltransferase.